A 177-amino-acid polypeptide reads, in one-letter code: Transcription factor E (177 aa).

Residues 9–91 (VEELLNELVG…YWRINYDKAL (83 aa)) enclose the HTH TFE/IIEalpha-type domain.

This sequence belongs to the TFE family. As to quaternary structure, monomer. Interaction with RNA polymerase subunits RpoF and RpoE is necessary for Tfe stimulatory transcription activity. Able to interact with Tbp and RNA polymerase in the absence of DNA promoter. Interacts both with the preinitiation and elongation complexes.

Its function is as follows. Transcription factor that plays a role in the activation of archaeal genes transcribed by RNA polymerase. Facilitates transcription initiation by enhancing TATA-box recognition by TATA-box-binding protein (Tbp), and transcription factor B (Tfb) and RNA polymerase recruitment. Not absolutely required for transcription in vitro, but particularly important in cases where Tbp or Tfb function is not optimal. It dynamically alters the nucleic acid-binding properties of RNA polymerases by stabilizing the initiation complex and destabilizing elongation complexes. Seems to translocate with the RNA polymerase following initiation and acts by binding to the non template strand of the transcription bubble in elongation complexes. In Archaeoglobus fulgidus (strain ATCC 49558 / DSM 4304 / JCM 9628 / NBRC 100126 / VC-16), this protein is Transcription factor E.